The sequence spans 99 residues: MSTILVLGGSNGRTLEKLAKKRDCQVIFHDGKNHGGVKKTFRSVIKKCDVIVVQKGACGHVSIDVAKEYAKKYDVPLLFNQGFGGTGALEIGLKHLQAA.

This sequence belongs to the UPF0751 family.

In Bacillus cereus (strain AH820), this protein is UPF0751 protein BCAH820_B0138.